A 177-amino-acid polypeptide reads, in one-letter code: Transmembrane protein 196 (177 aa).

4 consecutive transmembrane segments (helical) span residues 11–31 (LLVL…VGAV), 47–67 (SSPV…IFCA), 73–93 (LIMI…ILNI), and 106–126 (LYSL…GCTI). Positions 152 to 162 (HSHEMTEKDTE) are enriched in basic and acidic residues. Positions 152–177 (HSHEMTEKDTENITNGGGPLALNGRV) are disordered.

The protein resides in the cytoplasm. The protein localises to the membrane. In Xenopus tropicalis (Western clawed frog), this protein is Transmembrane protein 196 (tmem196).